Consider the following 1120-residue polypeptide: Cluster 41 polyketide synthase (1120 aa).

In terms of domain architecture, Ketosynthase family 3 (KS3) spans 7–430 (PHDVAVVGMG…GTVSHAIIEK (424 aa)). Residues cysteine 178, histidine 313, and histidine 353 each act as for beta-ketoacyl synthase activity in the active site. The interval 539-796 (VWVFSGHGAQ…TSAISAAAED (258 aa)) is malonyl-CoA:ACP transacylase (MAT) domain. Serine 625 acts as the For acyl/malonyl transferase activity in catalysis. Positions 804–943 (IKKILSMESR…IAMQWTSWRE (140 aa)) are ketoreductase (KR) domain. One can recognise a Carrier domain in the interval 1042–1116 (DSLSRQVREC…HIVKWLMEKT (75 aa)). Serine 1076 carries the O-(pantetheine 4'-phosphoryl)serine modification.

Polyketide synthase; part of the gene cluster 41 that mediates the biosynthesis of an extracellular and diffusible metabolite that is able to stimulate colony sclerotial production. This is Cluster 41 polyketide synthase from Aspergillus flavus (strain ATCC 200026 / FGSC A1120 / IAM 13836 / NRRL 3357 / JCM 12722 / SRRC 167).